The following is a 442-amino-acid chain: Kelch domain-containing protein 10 (442 aa).

The segment at 1–57 (MSAAQGWDRNRRRGGGAAGAGGGGSGAGGGSGGSGGRGTGQLNRFVQLSGRPHLPGK) is disordered. R13 is subject to Omega-N-methylarginine. The segment covering 15 to 39 (GGAAGAGGGGSGAGGGSGGSGGRGT) has biased composition (gly residues). 6 Kelch repeats span residues 87-154 (RPPP…PREL), 155-198 (ASMS…ALLS), 199-260 (CRGK…PEER), 261-319 (YRHE…RRCH), 320-364 (SCVQ…PEPV), and 365-403 (YFHC…LVVP). An interaction with CUL2 region spans residues 401-442 (VVPSLLELAWEKLLAAFPNLANLSRTQLLHLGLTQGLIERLK).

Belongs to the KLHDC10 family. As to quaternary structure, component of a CRL2 E3 ubiquitin-protein ligase complex, also named ECS (Elongin BC-CUL2/5-SOCS-box protein) complex, composed of CUL2, Elongin BC (ELOB and ELOC), RBX1 and substrate-specific adapter KLHDC10. Interacts (via the 6 Kelch repeats) with PPP5C.

The protein resides in the nucleus. The protein localises to the cytoplasm. It functions in the pathway protein modification; protein ubiquitination. Its function is as follows. Substrate-recognition component of a Cul2-RING (CRL2) E3 ubiquitin-protein ligase complex of the DesCEND (destruction via C-end degrons) pathway, which recognizes a C-degron located at the extreme C-terminus of target proteins, leading to their ubiquitination and degradation. The C-degron recognized by the DesCEND pathway is usually a motif of less than ten residues and can be present in full-length proteins, truncated proteins or proteolytically cleaved forms. The CRL2(KLHDC10) complex specifically recognizes proteins with a proline-glycine (Pro-Gly) or an alanine tail (CAT tail) at the C-terminus, leading to their ubiquitination and degradation. The CRL2(KLHDC10) complex is involved in the ribosome-associated quality control (RQC) pathway, which mediates the extraction of incompletely synthesized nascent chains from stalled ribosomes: CRL2(KLHDC10) acts downstream of NEMF and recognizes CAT tails associated with stalled nascent chains, leading to their ubiquitination and degradation. Participates in the oxidative stress-induced cell death through MAP3K5 activation. Inhibits PPP5C phosphatase activity on MAP3K5. Acts as a regulator of necroptosis. The protein is Kelch domain-containing protein 10 of Homo sapiens (Human).